The primary structure comprises 393 residues: Phosphoglycerate kinase (393 aa).

Substrate-binding positions include aspartate 21–asparagine 23, arginine 36, histidine 59–arginine 62, arginine 113, and arginine 146. ATP is bound by residues lysine 197, glutamate 319, and glycine 345–threonine 348.

It belongs to the phosphoglycerate kinase family. Monomer.

Its subcellular location is the cytoplasm. It catalyses the reaction (2R)-3-phosphoglycerate + ATP = (2R)-3-phospho-glyceroyl phosphate + ADP. It functions in the pathway carbohydrate degradation; glycolysis; pyruvate from D-glyceraldehyde 3-phosphate: step 2/5. This Nitratidesulfovibrio vulgaris (strain DSM 19637 / Miyazaki F) (Desulfovibrio vulgaris) protein is Phosphoglycerate kinase.